The sequence spans 349 residues: 4-hydroxythreonine-4-phosphate dehydrogenase (349 aa).

Residues His141 and Thr142 each contribute to the substrate site. A divalent metal cation-binding residues include His176, His221, and His276. Substrate is bound by residues Lys284, Asn293, and Arg302.

Belongs to the PdxA family. In terms of assembly, homodimer. Zn(2+) serves as cofactor. Mg(2+) is required as a cofactor. It depends on Co(2+) as a cofactor.

It localises to the cytoplasm. It carries out the reaction 4-(phosphooxy)-L-threonine + NAD(+) = 3-amino-2-oxopropyl phosphate + CO2 + NADH. The protein operates within cofactor biosynthesis; pyridoxine 5'-phosphate biosynthesis; pyridoxine 5'-phosphate from D-erythrose 4-phosphate: step 4/5. Functionally, catalyzes the NAD(P)-dependent oxidation of 4-(phosphooxy)-L-threonine (HTP) into 2-amino-3-oxo-4-(phosphooxy)butyric acid which spontaneously decarboxylates to form 3-amino-2-oxopropyl phosphate (AHAP). In Methylorubrum extorquens (strain CM4 / NCIMB 13688) (Methylobacterium extorquens), this protein is 4-hydroxythreonine-4-phosphate dehydrogenase.